A 562-amino-acid chain; its full sequence is Septation ring formation regulator EzrA (562 aa).

Residues 1–2 (ME) are Extracellular-facing. A helical membrane pass occupies residues 3-21 (FVIGLLIVLLALFAAGYFF). Over 22–562 (RKKIYAEIDR…VEKIKADISA (541 aa)) the chain is Cytoplasmic. 2 coiled-coil regions span residues 377–425 (YSLL…LKKT) and 470–497 (MEEA…LVEQ).

Belongs to the EzrA family. Post-translationally, may be degraded by FtsH protease.

Its subcellular location is the cell membrane. The protein localises to the membrane raft. Negative regulator of FtsZ ring formation; modulates the frequency and position of FtsZ ring formation. Inhibits FtsZ ring formation at polar sites. Interacts either with FtsZ or with one of its binding partners to promote depolymerization. The sequence is that of Septation ring formation regulator EzrA from Bacillus subtilis (strain 168).